We begin with the raw amino-acid sequence, 752 residues long: GTPase-activating protein rrc-1 (752 aa).

Residues 165–244 form the SH3 domain; that stretch reads PAIAAAVVTK…PRDCVMLIDD (80 aa). The Rho-GAP domain occupies 281–463; the sequence is LELTELFMRT…FCIENSDSLF (183 aa). Disordered stretches follow at residues 523–552 and 582–609; these read STGE…ATFQ and RSMR…GANN.

In terms of biological role, functions as a GTPase-activating protein (GAP) for ced-10/RAC-1 and CDC42. This chain is GTPase-activating protein rrc-1, found in Caenorhabditis briggsae.